Here is a 649-residue protein sequence, read N- to C-terminus: MSSFGTGKTKEVIFSMEEGSVKMFLRGRPVPMLIPDELAPTYSLDTRSELPSSRLKLDWVYGYRGRDCRANLYLLPTGEVVYFVASVAVLYSVEEQRQRHYLGHNDDIKCLAVHPDMVTIATGQVAGTTKEGKPLPPHVRVWDSVSLSTLHVLGLGVFDRAVCCVAFSKSNGGNLLCAVDESNDHVLSVWDWAKESKVVDSKCSNEAVLVATFHPTDPNLLITCGKSHIYFWSLEGGNLSKRQGLFEKHEKPKYVLCVTFLEGGDVVTGDSGGNLYVWGKGGNRITQEVLGAHDGGVFALCALRDGTLVSGGGRDRRVVLWGSDYSKVQEVEVPEDFGPVRTVAEGRGDTLYVGTTRNSILLGSVHTGFSLLVQGHVEELWGLATHPSRAQFVSCGQDKLVHLWSSETHQPVWSRSIEDPARSAGFHPSGSVLAVGTVTGRWLLLDTDTRDLVAIHTDGNEQISVVSFSPDGAYLAVGSHDNLVYVYTVDQGGRKVSRLGKCSGHSSFITHLDWAQDSTCFVTNSGDYEILYWDAATCKQITSADTVRNVQWATATCVLGFGVFGIWPEGADGTDINAVARSHDGNLLVSADDFGKVHLFSYPCCQPRALSHKYGGHSSHVTNVAFLWDDSMVLTTGGKDTSVLQWRVA.

The interval 10–649 (KEVIFSMEEG…DTSVLQWRVA (640 aa)) is tandem atypical propeller in EMLs. WD repeat units follow at residues 56–93 (KLDW…LYSV), 97–144 (RQRH…VWDS), 151–192 (HVLG…VWDW), 195–234 (ESKV…FWSL), 241–280 (KRQG…VWGK), 285–323 (ITQE…LWGS), 369–406 (FSLL…LWSS), 410–447 (QPVW…LLDT), 452–489 (LVAI…VYTV), 495–535 (KVSR…YWDA), 564–602 (FGIW…LFSY), and 609–648 (ALSH…QWRV).

Belongs to the WD repeat EMAP family. Interacts with GRID2 and may also interact with GRID1. Interacts with EML3. Binds unpolymerized tubulins via its WD repeat region. As to expression, widely expressed in both brain and peripheral tissues, including brainstem and enrichment in the postsynaptic density, PSD.

It localises to the cytoplasm. The protein resides in the cytoskeleton. The protein localises to the spindle. Its function is as follows. Tubulin binding protein that inhibits microtubule nucleation and growth, resulting in shorter microtubules. This Rattus norvegicus (Rat) protein is Echinoderm microtubule-associated protein-like 2 (Eml2).